The primary structure comprises 499 residues: Probable cytosol aminopeptidase (499 aa).

Residues K263 and D268 each coordinate Mn(2+). K275 is an active-site residue. Positions 286, 345, and 347 each coordinate Mn(2+). R349 is an active-site residue.

The protein belongs to the peptidase M17 family. Requires Mn(2+) as cofactor.

The protein localises to the cytoplasm. It carries out the reaction Release of an N-terminal amino acid, Xaa-|-Yaa-, in which Xaa is preferably Leu, but may be other amino acids including Pro although not Arg or Lys, and Yaa may be Pro. Amino acid amides and methyl esters are also readily hydrolyzed, but rates on arylamides are exceedingly low.. The catalysed reaction is Release of an N-terminal amino acid, preferentially leucine, but not glutamic or aspartic acids.. Presumably involved in the processing and regular turnover of intracellular proteins. Catalyzes the removal of unsubstituted N-terminal amino acids from various peptides. In Chlamydia muridarum (strain MoPn / Nigg), this protein is Probable cytosol aminopeptidase (pepA).